The primary structure comprises 582 residues: Leucine-rich repeat protein SHOC-2 (582 aa).

Basic and acidic residues-rich tracts occupy residues 1–29 (MSSS…KESK) and 36–57 (KESK…KKES). The interval 1-88 (MSSSLGKEKD…PGTRKKSSNA (88 aa)) is disordered. Positions 63-66 (GVAF) match the RVxF motif; important for interaction with PP1c motif. 20 LRR repeats span residues 101–122 (NSMR…VKEL), 124–145 (QLTE…VGCL), 147–169 (NLMT…DNLK), 170–191 (KLRM…VYRL), 193–215 (SLTT…KNLP), 216–237 (KLSM…IGEL), 239–260 (NLIT…IGNC), 262–283 (QITN…IGNL), 285–307 (SLNR…AKCS), 308–329 (ALEE…LLSS), 332–353 (KLNS…GPSQ), 356–377 (TIYS…IFSR), 380–400 (VLSK…DFGT), 403–424 (SMVE…VSGL), 426–448 (SLEV…GNLR), 449–470 (KLRE…IAYL), 472–494 (DLQK…GHLT), 495–516 (NLTH…IGTL), 518–540 (NLEE…LALC), and 542–563 (KLSI…IVAG).

The protein belongs to the SHOC2 family. In terms of assembly, component of the SHOC2-MRAS-PP1c (SMP) complex consisting of SHOC2, GTP-bound M-Ras/MRAS and the catalytic subunit of protein phosphatase 1 (either PPP1CA, PPP1CB or PPP1CC). SHOC2 and PP1c preferably bind M-Ras/MRAS, but they also bind K-Ras/KRAS, N-Ras/NRAS and H-Ras/HRAS; these interactions are GTP-dependent and both SHOC2 and PP1c are required to form a stable complex. Interacts with PP1c in the absence of Ras GTPases. Interacts with M-Ras/MRAS and RAF1. Interacts with ERBIN; disrupts the interaction with RAF1 and Ras, preventing the activation of the Ras signaling pathway. Interacts with LZTR1.

Its subcellular location is the cytoplasm. The protein localises to the nucleus. In terms of biological role, core component of the SHOC2-MRAS-PP1c (SMP) holophosphatase complex that regulates activation of the MAPK pathway. Acts as a scaffolding protein in the SMP complex. The SMP complex specifically dephosphorylates the inhibitory phosphorylation at 'Ser-259' of RAF1 kinase, 'Ser-365' of BRAF kinase and 'Ser-214' of ARAF kinase, stimulating their kinase activities. The SMP complex enhances the dephosphorylation activity and substrate specificity of PP1c. The polypeptide is Leucine-rich repeat protein SHOC-2 (Shoc2) (Mus musculus (Mouse)).